A 201-amino-acid chain; its full sequence is MYB-like transcription factor EOBI (201 aa).

HTH myb-type domains lie at aspartate 10–leucine 62 and arginine 63–isoleucine 117. DNA-binding regions (H-T-H motif) lie at residues tryptophan 38–leucine 62 and tryptophan 90–isoleucine 113. The tract at residues aspartate 121–isoleucine 170 is disordered. Over residues glutamine 135 to tyrosine 159 the composition is skewed to polar residues. A compositionally biased stretch (low complexity) spans threonine 160–asparagine 169.

As to expression, expressed exclusively in flower organs. Accumulates mostly in flower limbs, to a lower extent in pistils and flower tubes, and, at low levels, in stamens.

The protein localises to the nucleus. Its function is as follows. MYB-type transcription factor controlling the production of volatile organic compounds (VOCs), including floral volatile benzenoids and phenylpropanoids (FVBP), in flowers of fragrant cultivars (e.g. cv. Mitchell and cv. V26) by regulating the expression of ODO1, a key regulator of the shikimate pathway, and of several biosynthetic floral scent-related genes (e.g. IGS, EGS, BSMT1, BSMT2, PAL1, PAL2, EPSPS, DAHPS, CS, CM1, ADT1 and PPA-AT). Binds to and activates the promoters of at least ODO1, IGS1 and PAL1. The chain is MYB-like transcription factor EOBI from Petunia hybrida (Petunia).